The primary structure comprises 688 residues: PTS system glucoside-specific EIICBA component (688 aa).

The PTS EIIC type-1 domain occupies 3–427 (KKLFGQLQRI…FKLKTPGRED (425 aa)). 10 helical membrane passes run 12–32 (IGKALMLPVAILPAAGILLAF), 81–101 (LGLAGGDGVAALAALVGYLIM), 137–157 (LVLGIPTLQTGVFGGIIMGAL), 182–202 (FVPIVTSVVAIATGVLLSFAW), 223–243 (LTTFIFGIIERSLIPFGLHHI), 284–304 (AFTTGKYPFMMFGLPAAAFAI), 315–335 (VVGGLMLSAGLTAFLTGITEP), 340–360 (FLFVAPVLYGIHVLLAGTSFL), 364–384 (LLGVKIGMTFSGGFIDYILYG), and 395–415 (LVIPVGIVYAIVYYFLFDFAI). The PTS EIIB type-1 domain occupies 438–519 (AKLPFDVLDA…AKIMSGEITK (82 aa)). C460 acts as the Phosphocysteine intermediate; for EIIB activity in catalysis. Positions 560–664 (DQVFAGKMMG…SIVTPMIITN (105 aa)) constitute a PTS EIIA type-1 domain. H612 serves as the catalytic Tele-phosphohistidine intermediate; for EIIA activity.

Its subcellular location is the cell membrane. Its function is as follows. The phosphoenolpyruvate-dependent sugar phosphotransferase system (sugar PTS), a major carbohydrate active -transport system, catalyzes the phosphorylation of incoming sugar substrates concomitantly with their translocation across the cell membrane. This system is involved in alpha- and beta-glucoside transport. This Staphylococcus aureus (strain Mu3 / ATCC 700698) protein is PTS system glucoside-specific EIICBA component (glcB).